The sequence spans 254 residues: UPF0603 protein YdjH (254 aa).

Positions 1–29 (MRGFFGKAIFVVLAVFIMMPLLGIEAVRA) are cleaved as a signal peptide. The helical transmembrane segment at 166 to 186 (IFFTWWFQLIAAIAVGGIAVS) threads the bilayer. Over residues 223–235 (VTRERKPSDKDSG) the composition is skewed to basic and acidic residues. A disordered region spans residues 223-254 (VTRERKPSDKDSGSDGGVTKGGTSYSGSRGSF). The segment covering 243–254 (GGTSYSGSRGSF) has biased composition (polar residues).

It belongs to the UPF0603 family.

The protein localises to the cell membrane. The chain is UPF0603 protein YdjH (ydjH) from Bacillus subtilis (strain 168).